Reading from the N-terminus, the 743-residue chain is Isocitrate dehydrogenase [NADP] 2 (743 aa).

NADP(+) is bound by residues Asn87 and Ser89. Ser134, Asn137, Arg141, Arg147, and Lys257 together coordinate D-threo-isocitrate. Asn137 serves as a coordination point for NADP(+). Residue Asp352 coordinates Mg(2+). D-threo-isocitrate-binding residues include Tyr422 and Arg549. Mg(2+) contacts are provided by Asp550 and Asp554. 5 residues coordinate NADP(+): Ser587, His591, Arg602, Asp604, and Arg651.

Belongs to the monomeric-type IDH family. In terms of assembly, monomer. Requires Mg(2+) as cofactor. It depends on Mn(2+) as a cofactor.

The enzyme catalyses D-threo-isocitrate + NADP(+) = 2-oxoglutarate + CO2 + NADPH. Its function is as follows. Catalyzes the oxidative decarboxylation of isocitrate to 2-oxoglutarate and carbon dioxide with the concomitant reduction of NADP(+). The polypeptide is Isocitrate dehydrogenase [NADP] 2 (icd2) (Colwellia maris).